Here is a 410-residue protein sequence, read N- to C-terminus: Dual-specificity RNA methyltransferase RlmN (410 aa).

The disordered stretch occupies residues 7–26; the sequence is VSSENLDGQQQSSSTPASPA. Over residues 15–26 the composition is skewed to low complexity; sequence QQQSSSTPASPA. The active-site Proton acceptor is Glu120. The 244-residue stretch at 130–373 folds into the Radical SAM core domain; the sequence is TGSRKTLCIS…CTIRQTRGDD (244 aa). Residues Cys137 and Cys378 are joined by a disulfide bond. [4Fe-4S] cluster is bound by residues Cys144, Cys148, and Cys151. Residues 200–201, Ser232, 254–256, and Asn335 contribute to the S-adenosyl-L-methionine site; these read GE and SLH. The active-site S-methylcysteine intermediate is Cys378.

Belongs to the radical SAM superfamily. RlmN family. The cofactor is [4Fe-4S] cluster.

It is found in the cytoplasm. It catalyses the reaction adenosine(2503) in 23S rRNA + 2 reduced [2Fe-2S]-[ferredoxin] + 2 S-adenosyl-L-methionine = 2-methyladenosine(2503) in 23S rRNA + 5'-deoxyadenosine + L-methionine + 2 oxidized [2Fe-2S]-[ferredoxin] + S-adenosyl-L-homocysteine. It carries out the reaction adenosine(37) in tRNA + 2 reduced [2Fe-2S]-[ferredoxin] + 2 S-adenosyl-L-methionine = 2-methyladenosine(37) in tRNA + 5'-deoxyadenosine + L-methionine + 2 oxidized [2Fe-2S]-[ferredoxin] + S-adenosyl-L-homocysteine. Specifically methylates position 2 of adenine 2503 in 23S rRNA and position 2 of adenine 37 in tRNAs. m2A2503 modification seems to play a crucial role in the proofreading step occurring at the peptidyl transferase center and thus would serve to optimize ribosomal fidelity. In Acinetobacter baumannii (strain AB307-0294), this protein is Dual-specificity RNA methyltransferase RlmN.